The chain runs to 2483 residues: Cation-independent mannose-6-phosphate receptor (2483 aa).

An N-terminal signal peptide occupies residues M1–A35. Topologically, residues Q36–A2295 are lumenal. MRH domains lie at A42 to K158, V167 to R315, E321 to K463, L468 to L613, E619 to E755, L758 to I917, Q925 to P1072, V1075 to V1212, and D1218 to P1356. Disulfide bonds link C44–C64 and C72–C79. An N-linked (GlcNAc...) asparagine glycan is attached at N107. Cystine bridges form between C112-C144, C129-C156, C169-C207, C223-C230, C270-C301, C283-C313, C323-C361, and C369-C377. N-linked (GlcNAc...) asparagine glycosylation is found at N395 and N430. Disulfide bonds link C415–C449, C429–C461, C470–C513, and C525–C532. Residues N537 and N575 are each glycosylated (N-linked (GlcNAc...) asparagine). 2 cysteine pairs are disulfide-bonded: C566–C599 and C580–C611. A glycan (N-linked (GlcNAc...) asparagine) is linked at N620. Disulfide bonds link C621/C658, C666/C673, C724/C753, C760/C807, and C816/C823. An N-linked (GlcNAc...) asparagine glycan is attached at N740. N-linked (GlcNAc...) asparagine glycosylation occurs at N864. Cystine bridges form between C868-C903, C886-C915, C927-C964, C970-C981, C1035-C1070, C1077-C1118, and C1127-C1135. N-linked (GlcNAc...) asparagine glycosylation occurs at N944. The N-linked (GlcNAc...) asparagine glycan is linked to N1157. 4 disulfide bridges follow: C1170/C1198, C1183/C1210, C1220/C1255, and C1263/C1275. N1239 carries an N-linked (GlcNAc...) asparagine glycan. Residue N1305 is glycosylated (N-linked (GlcNAc...) asparagine). Cystine bridges form between C1312-C1342 and C1326-C1354. N-linked (GlcNAc...) asparagine glycosylation occurs at N1358. MRH domains follow at residues T1360 to V1501, D1507 to Q1641, T1643 to D1790, Q1795 to P1982, M1985 to V2120, and V2128 to L2273. 2 disulfides stabilise this stretch: C1362–C1401 and C1413–C1420. N-linked (GlcNAc...) asparagine glycosylation is present at N1423. Disulfide bonds link C1454–C1487, C1469–C1499, C1509–C1546, C1552–C1559, C1591–C1627, C1607–C1639, C1645–C1688, C1699–C1706, C1743–C1776, C1759–C1788, C1797–C1832, C1843–C1849, C1886–C1968, C1896–C1920, C1910–C1935, C1950–C1980, C1987–C2022, C2032–C2039, C2075–C2106, and C2089–C2118. An N-linked (GlcNAc...) asparagine glycan is attached at N1532. N1649 carries an N-linked (GlcNAc...) asparagine glycan. A glycan (N-linked (GlcNAc...) asparagine) is linked at N1750. A glycan (N-linked (GlcNAc...) asparagine) is linked at N1809. One can recognise a Fibronectin type-II domain in the interval D1891–Q1937. N-linked (GlcNAc...) asparagine glycosylation is present at N2078. N2129 carries N-linked (GlcNAc...) asparagine glycosylation. Disulfide bonds link C2181/C2187, C2225/C2259, and C2241/C2271. A helical membrane pass occupies residues V2296–L2316. At H2317–I2483 the chain is on the cytoplasmic side. At K2342 the chain carries N6-acetyllysine. S2401 is modified (phosphoserine). The interval S2415–I2483 is disordered. R2417 bears the Omega-N-methylarginine mark. Basic and acidic residues-rich tracts occupy residues V2434 to A2451 and S2471 to I2483. S2471 and S2476 each carry phosphoserine.

This sequence belongs to the MRL1/IGF2R family. As to quaternary structure, binds HA-I and HA-II plasma membrane adapters. Interacts with DPP4; the interaction is direct. Binds GGA1, GGA2 and GGA3. Interacts with the heterotrimeric retromer cargo-selective complex (CSC), formed by VPS26 (VPS26A or VPS26B), VPS29 and VPS35; which is involved in retrograde trafficking of the receptor from endosomes to the Golgi apparatus. In terms of processing, palmitoylated. Undergoes cysteine S-palmitoylation which promotes interaction with the retromer cargo-selective complex which mediates its retrograde trafficking to the Golgi apparatus.

The protein resides in the golgi apparatus membrane. It is found in the endosome membrane. In terms of biological role, mediates the transport of phosphorylated lysosomal enzymes from the Golgi complex and the cell surface to lysosomes. Lysosomal enzymes bearing phosphomannosyl residues bind specifically to mannose-6-phosphate receptors in the Golgi apparatus and the resulting receptor-ligand complex is transported to an acidic prelysosomal compartment where the low pH mediates the dissociation of the complex. The receptor is then recycled back to the Golgi for another round of trafficking through its binding to the retromer. This receptor also binds IGF2. Acts as a positive regulator of T-cell coactivation by binding DPP4. This Mus musculus (Mouse) protein is Cation-independent mannose-6-phosphate receptor (Igf2r).